The sequence spans 286 residues: 2-hydroxy-6-oxononadienedioate/2-hydroxy-6-oxononatrienedioate hydrolase 2 (286 aa).

The Proton acceptor role is filled by His-266.

The protein belongs to the AB hydrolase superfamily. MhpC family. In terms of assembly, homodimer.

The enzyme catalyses (2Z,4E)-2-hydroxy-6-oxonona-2,4-dienedioate + H2O = (2Z)-2-hydroxypenta-2,4-dienoate + succinate + H(+). It carries out the reaction (2Z,4E,7E)-2-hydroxy-6-oxonona-2,4,7-trienedioate + H2O = (2Z)-2-hydroxypenta-2,4-dienoate + fumarate + H(+). It participates in aromatic compound metabolism; 3-phenylpropanoate degradation. In terms of biological role, catalyzes the cleavage of the C5-C6 bond of 2-hydroxy-6-oxononadienedioate and 2-hydroxy-6-oxononatrienedioate, a dienol ring fission product of the bacterial meta-cleavage pathway for degradation of phenylpropionic acid. The sequence is that of 2-hydroxy-6-oxononadienedioate/2-hydroxy-6-oxononatrienedioate hydrolase 2 from Pseudomonas putida (Arthrobacter siderocapsulatus).